The chain runs to 183 residues: UPF0398 protein MCCL_1095 (183 aa).

Belongs to the UPF0398 family.

The protein is UPF0398 protein MCCL_1095 of Macrococcus caseolyticus (strain JCSC5402) (Macrococcoides caseolyticum).